The primary structure comprises 272 residues: Indole-3-glycerol phosphate synthase (272 aa).

It belongs to the TrpC family.

The enzyme catalyses 1-(2-carboxyphenylamino)-1-deoxy-D-ribulose 5-phosphate + H(+) = (1S,2R)-1-C-(indol-3-yl)glycerol 3-phosphate + CO2 + H2O. The protein operates within amino-acid biosynthesis; L-tryptophan biosynthesis; L-tryptophan from chorismate: step 4/5. This chain is Indole-3-glycerol phosphate synthase, found in Mycobacterium tuberculosis (strain ATCC 25177 / H37Ra).